The chain runs to 465 residues: MTIHIYNTLTRQKEEFVPLEENKVKMYVCGPTVYNYIHIGNARPPMVFDTVRRYLEYKGYDVQYVSNFTDVDDKLIKAANELGEDVPTIADRFVEAYFEDVTALGCKHATVHPRVTENMDIIIEFIQELVNKGYAYESEGDVYFKTKEFEGYGKLSHQPIADLRHGARIEVGEKKQDPLDFALWKAAKEGEIFWESPWGQGRPGWHIECSAMARKYLGDTIDIHAGGQDLAFPHHENEIAQSEALTGKTFARYWMHNGYININNEKMSKSLGNFILVHDIIKQYDPQLIRFFMLSVHYRHPINFSEELLQSTNNGLERIKTAYGNLKHRMESSTDLTDHNEKWLAEIEKFQTAFEEAMNDDFNTANAITELYNVANHANQYLLEEHTSKVVIEAYVKQLETLFDILGLELSKEELLDEEIEELIQKRIEARKNRDFALSDQIRDDLKERNIILEDTAQGTRWKRG.

Position 29 (cysteine 29) interacts with Zn(2+). A 'HIGH' region motif is present at residues 31-41 (PTVYNYIHIGN). 3 residues coordinate Zn(2+): cysteine 209, histidine 234, and glutamate 238. The 'KMSKS' region signature appears at 266–270 (KMSKS). Lysine 269 provides a ligand contact to ATP. Serine 270 is modified (phosphoserine).

The protein belongs to the class-I aminoacyl-tRNA synthetase family. As to quaternary structure, monomer. The cofactor is Zn(2+).

It localises to the cytoplasm. The catalysed reaction is tRNA(Cys) + L-cysteine + ATP = L-cysteinyl-tRNA(Cys) + AMP + diphosphate. In Bacillus cereus (strain B4264), this protein is Cysteine--tRNA ligase.